The primary structure comprises 423 residues: Sorting nexin-4 (423 aa).

Over residues 1–21 (MTDKGKNDLTSKAKDKARGNP) the composition is skewed to basic and acidic residues. The segment at 1-25 (MTDKGKNDLTSKAKDKARGNPEKPP) is disordered. Residues 29–157 (EIIVSDPQKR…TFLVSKDWES (129 aa)) form the PX domain. 4 residues coordinate a 1,2-diacyl-sn-glycero-3-phospho-(1D-myo-inositol-3-phosphate): Arg78, Ser80, Lys104, and Arg123. Coiled-coil stretches lie at residues 217–252 (KKND…AKLK) and 346–381 (SRRE…ECLK).

The protein belongs to the sorting nexin family. As to quaternary structure, forms a complex with ATG20 and ATG17. Binds also to SNC1 and SNX41.

It localises to the cytoplasm. Its subcellular location is the cytosol. It is found in the preautophagosomal structure membrane. The protein localises to the endosome membrane. In terms of biological role, sorting nexin, involved in the separation or division of vacuoles throughout the entire life cycle of the cells. Involved in retrieval of late-Golgi SNAREs from post-Golgi endosomes to the trans-Golgi network, for cytoplasm to vacuole transport (Cvt), and autophagy of large cargos including mitophagy, pexophagy and glycophagy. Involved in proper sorting of the v-SNARE protein SNC1. This chain is Sorting nexin-4, found in Saccharomyces cerevisiae (strain ATCC 204508 / S288c) (Baker's yeast).